The following is a 483-amino-acid chain: Serine protease HTRA4 (483 aa).

An N-terminal signal peptide occupies residues 1-30 (MSFQRLWAVRTQFLLLWLLLPAVPVPWAEA). Residues 35-113 (VSLPCPDACD…GAWLGTCGCA (79 aa)) form the IGFBP N-terminal domain. 6 disulfides stabilise this stretch: cysteine 39–cysteine 65, cysteine 43–cysteine 67, cysteine 48–cysteine 68, cysteine 54–cysteine 71, cysteine 79–cysteine 93, and cysteine 87–cysteine 110. Residues 208 to 368 (GSGFIVSEDG…IPSDRIRQFL (161 aa)) are serine protease. Residues histidine 224, aspartate 254, and serine 332 each act as charge relay system in the active site. The PDZ domain occupies 379–471 (KAPLQKKYLG…LSIIVLRGSQ (93 aa)).

Belongs to the peptidase S1C family.

It localises to the secreted. Its function is as follows. Serine protease. This Mus musculus (Mouse) protein is Serine protease HTRA4 (Htra4).